A 123-amino-acid chain; its full sequence is Putative iron-sulfur cluster insertion protein ErpA (123 aa).

Positions 51, 115, and 117 each coordinate iron-sulfur cluster.

It belongs to the HesB/IscA family. As to quaternary structure, homodimer. The cofactor is iron-sulfur cluster.

Functionally, required for insertion of 4Fe-4S clusters. The polypeptide is Putative iron-sulfur cluster insertion protein ErpA (Burkholderia multivorans (strain ATCC 17616 / 249)).